Reading from the N-terminus, the 532-residue chain is Protoporphyrinogen oxidase (532 aa).

FAD-binding positions include 9–14, I289, and 511–513; these read GSGISG and VGI.

Belongs to the protoporphyrinogen/coproporphyrinogen oxidase family. Protoporphyrinogen oxidase subfamily. FAD serves as cofactor.

The protein localises to the mitochondrion. It carries out the reaction protoporphyrinogen IX + 3 O2 = protoporphyrin IX + 3 H2O2. Its pathway is porphyrin-containing compound metabolism; protoporphyrin-IX biosynthesis; protoporphyrin-IX from protoporphyrinogen-IX: step 1/1. Catalyzes the 6-electron oxidation of protoporphyrinogen-IX to form protoporphyrin-IX. The chain is Protoporphyrinogen oxidase (ppox) from Dictyostelium discoideum (Social amoeba).